We begin with the raw amino-acid sequence, 333 residues long: Autoinducer 2 import system permease protein LsrD (333 aa).

10 consecutive transmembrane segments (helical) span residues 7–27 (YGWE…FGIA), 45–65 (ICIG…GIDI), 70–90 (TIGL…PMAA), 91–111 (AIPL…ALIL), 118–138 (LVIT…LSGI), 162–182 (LFGL…CWLF), 212–232 (TLYL…IVLV), 240–260 (SDLG…GGAN), 261–281 (IYGG…IGYL), and 288–308 (AGVP…IAVV).

This sequence belongs to the binding-protein-dependent transport system permease family. AraH/RbsC subfamily. In terms of assembly, the complex is composed of two ATP-binding proteins (LsrA), two transmembrane proteins (LsrC and LsrD) and a solute-binding protein (LsrB).

It is found in the cell inner membrane. Its function is as follows. Part of the ABC transporter complex LsrABCD involved in autoinducer 2 (AI-2) import. Probably responsible for the translocation of the substrate across the membrane. This Photorhabdus laumondii subsp. laumondii (strain DSM 15139 / CIP 105565 / TT01) (Photorhabdus luminescens subsp. laumondii) protein is Autoinducer 2 import system permease protein LsrD (lsrD).